A 527-amino-acid polypeptide reads, in one-letter code: Berberine bridge enzyme-like 8 (527 aa).

Residues 1–20 (MKYALILVLFFVVFIWQSSS) form the signal peptide. Cys31 and Cys93 are disulfide-bonded. N-linked (GlcNAc...) asparagine glycans are attached at residues Asn51 and Asn68. An FAD-binding PCMH-type domain is found at 71-247 (STPKPFLIIA…LAYKINLVEV (177 aa)). The segment at residues 108 to 172 (HDYDGLSYVT…KTLAYPAGIC (65 aa)) is a cross-link (6-(S-cysteinyl)-8alpha-(pros-histidyl)-FAD (His-Cys)). Asn250, Asn263, and Asn292 each carry an N-linked (GlcNAc...) asparagine glycan.

This sequence belongs to the oxygen-dependent FAD-linked oxidoreductase family. FAD serves as cofactor. Post-translationally, the FAD cofactor is bound via a bicovalent 6-S-cysteinyl, 8alpha-N1-histidyl FAD linkage.

Its subcellular location is the secreted. The protein resides in the cell wall. The sequence is that of Berberine bridge enzyme-like 8 from Arabidopsis thaliana (Mouse-ear cress).